A 209-amino-acid polypeptide reads, in one-letter code: Imidazole glycerol phosphate synthase subunit HisH (209 aa).

The region spanning 1–205 (MIAIIDYGMG…QGVVEAWKSS (205 aa)) is the Glutamine amidotransferase type-1 domain. C79 serves as the catalytic Nucleophile. Residues H180 and E182 contribute to the active site.

In terms of assembly, heterodimer of HisH and HisF.

The protein resides in the cytoplasm. The enzyme catalyses 5-[(5-phospho-1-deoxy-D-ribulos-1-ylimino)methylamino]-1-(5-phospho-beta-D-ribosyl)imidazole-4-carboxamide + L-glutamine = D-erythro-1-(imidazol-4-yl)glycerol 3-phosphate + 5-amino-1-(5-phospho-beta-D-ribosyl)imidazole-4-carboxamide + L-glutamate + H(+). It catalyses the reaction L-glutamine + H2O = L-glutamate + NH4(+). It functions in the pathway amino-acid biosynthesis; L-histidine biosynthesis; L-histidine from 5-phospho-alpha-D-ribose 1-diphosphate: step 5/9. In terms of biological role, IGPS catalyzes the conversion of PRFAR and glutamine to IGP, AICAR and glutamate. The HisH subunit catalyzes the hydrolysis of glutamine to glutamate and ammonia as part of the synthesis of IGP and AICAR. The resulting ammonia molecule is channeled to the active site of HisF. This is Imidazole glycerol phosphate synthase subunit HisH from Bacillus cereus (strain G9842).